The chain runs to 65 residues: Protein translocase subunit SecE (65 aa).

Topologically, residues 1 to 34 (MEKLRKFFREVIAEAKKISWPSRKELLTSFGVVL) are cytoplasmic. A helical membrane pass occupies residues 35 to 51 (VILAVTSVYFFVLDFIF). Residues 52–65 (SGVVSAIFKALGIG) are Extracellular-facing.

This sequence belongs to the SecE/SEC61-gamma family. In terms of assembly, component of the Sec protein translocase complex. Heterotrimer consisting of SecY, SecE and SecG subunits. The heterotrimers can form oligomers, although 1 heterotrimer is thought to be able to translocate proteins. Interacts with SecDF, and other proteins may be involved. The channel interacts with SecA via subunit SecY.

The protein resides in the cell inner membrane. Functionally, essential subunit of the protein translocation channel SecYEG. Clamps together the 2 halves of SecY. May contact the channel plug during translocation. This is Protein translocase subunit SecE from Thermotoga maritima (strain ATCC 43589 / DSM 3109 / JCM 10099 / NBRC 100826 / MSB8).